Here is a 167-residue protein sequence, read N- to C-terminus: Zymogen granule membrane protein 16 (167 aa).

The first 16 residues, Met-1–Ala-16, serve as a signal peptide directing secretion. Positions Ser-24 to Thr-159 constitute a Jacalin-type lectin domain.

It belongs to the jacalin lectin family. In terms of tissue distribution, expressed in pancreas, colon, duodenum, and much less in stomach.

The protein localises to the secreted. The protein resides in the extracellular space. Its subcellular location is the extracellular matrix. It is found in the zymogen granule lumen. It localises to the golgi apparatus lumen. Its function is as follows. May play a role in protein trafficking. May act as a linker molecule between the submembranous matrix on the luminal side of zymogen granule membrane (ZGM) and aggregated secretory proteins during granule formation in the TGN. This chain is Zymogen granule membrane protein 16 (Zg16), found in Rattus norvegicus (Rat).